Reading from the N-terminus, the 576-residue chain is uncharacterized protein (576 aa).

Positions 41–78 are disordered; it reads EKESESKLNSKSTTLQSSDSEDWDSEENEDDITDVGVP. Residues 49 to 58 show a composition bias toward low complexity; the sequence is NSKSTTLQSS. Acidic residues predominate over residues 59–73; that stretch reads DSEDWDSEENEDDIT. WD repeat units follow at residues 87-126, 195-235, 248-288, 296-335, and 393-433; these read GHSK…ATNP, GHIA…SQLE, LSRI…KRPV, LPQQ…KCVN, and TVTA…RGVK. Positions 547-576 are disordered; it reads SETQPTPIYQGVTEGDISSEEGNPSKKQKR.

This is an uncharacterized protein from Schizosaccharomyces pombe (strain 972 / ATCC 24843) (Fission yeast).